The following is a 226-amino-acid chain: Protein-L-isoaspartate O-methyltransferase (226 aa).

Residue S66 is part of the active site.

The protein belongs to the methyltransferase superfamily. L-isoaspartyl/D-aspartyl protein methyltransferase family.

It localises to the cytoplasm. It carries out the reaction [protein]-L-isoaspartate + S-adenosyl-L-methionine = [protein]-L-isoaspartate alpha-methyl ester + S-adenosyl-L-homocysteine. In terms of biological role, catalyzes the methyl esterification of L-isoaspartyl residues in peptides and proteins that result from spontaneous decomposition of normal L-aspartyl and L-asparaginyl residues. It plays a role in the repair and/or degradation of damaged proteins. This Methanopyrus kandleri (strain AV19 / DSM 6324 / JCM 9639 / NBRC 100938) protein is Protein-L-isoaspartate O-methyltransferase.